We begin with the raw amino-acid sequence, 1451 residues long: Glutamate receptor ionotropic, NMDA 2A (1451 aa).

The first 20 residues, 1 to 20 (MGMFVLLLYTFLYAGDLGHG), serve as a signal peptide directing secretion. The Extracellular portion of the chain corresponds to 21-547 (AEKSFPVLNI…PSAFLEPFSA (527 aa)). N-linked (GlcNAc...) asparagine glycosylation is present at Asn67. Cys79 and Cys312 are oxidised to a cystine. 3 residues coordinate Zn(2+): His120, Asp258, and Asp274. N-linked (GlcNAc...) asparagine glycans are attached at residues Asn332, Asn372, Asn435, and Asn436. 2 disulfide bridges follow: Cys421-Cys447 and Cys428-Cys448. L-glutamate contacts are provided by Ser503, Thr505, and Arg510. N-linked (GlcNAc...) asparagine glycosylation is present at Asn533. Residues 548 to 568 (SVWVMMFVMLLLVSAMAVFIF) traverse the membrane as a helical segment. The Cytoplasmic segment spans residues 569–592 (EYFSPVGYNRNLAQGKDPHGPSFT). The interval 591-612 (FTIGKAVWLLWGLVFNNSVPVQ) is pore-forming. An intramembrane region (discontinuously helical) is located at residues 593-612 (IGKAVWLLWGLVFNNSVPVQ). Residues 613 to 617 (NPKGT) are Cytoplasmic-facing. The helical transmembrane segment at 618–637 (TSKIIVSIWAFFAVIFLASY) threads the bilayer. At 638–808 (TANLAAFMIQ…VMSSQLDIDN (171 aa)) the chain is on the extracellular side. N-linked (GlcNAc...) asparagine glycosylation is present at Asn679. Ser681, Thr682, and Asp723 together coordinate L-glutamate. An intrachain disulfide couples Cys737 to Cys792. The chain crosses the membrane as a helical span at residues 809–829 (MAGVFYMLAAAMALSLITFVW). The Cytoplasmic portion of the chain corresponds to 830 to 1451 (EHLFYWKLRF…KKMPSLESDV (622 aa)). The segment covering 1011–1022 (TLRQTQGSVNEN) has biased composition (polar residues). Disordered regions lie at residues 1011 to 1080 (TLRQ…VSAK) and 1100 to 1165 (NRDK…GRLP). Basic and acidic residues-rich tracts occupy residues 1055–1073 (CHID…DNLK), 1100–1113 (NRDK…DKEP), and 1138–1149 (YQDHNDNYRKTE).

It belongs to the glutamate-gated ion channel (TC 1.A.10.1) family. Heterotetramer. Forms heterotetrameric channels composed of two GluN1/zeta subunits (GRIN1), and two identical GluN2/epsilon subunits (GRIN2A, GRIN2B, GRIN2C or GRIN2D) or GluN3 subunits (GRIN3A or GRIN3B) (in vitro). In vivo, the subunit composition may depend on the expression levels of the different subunits.

The protein localises to the cell membrane. Its subcellular location is the postsynaptic cell membrane. It catalyses the reaction Ca(2+)(in) = Ca(2+)(out). It carries out the reaction Na(+)(in) = Na(+)(out). The enzyme catalyses K(+)(in) = K(+)(out). Component of N-methyl-D-aspartate (NMDA) receptors (NMDARs) that function as heterotetrameric, ligand-gated cation channels with high calcium permeability and voltage-dependent block by Mg(2+). MDARs participate in synaptic plasticity. Channel activation requires binding of the neurotransmitter L-glutamate to the GluN2 subunit, glycine binding to the GluN1 subunit, plus membrane depolarization to eliminate channel inhibition by Mg(2+). NMDARs mediate simultaneously the potasium efflux and the influx of calcium and sodium. Each GluN2 subunit confers differential attributes to channel properties, including activation, deactivation and desensitization kinetics, pH sensitivity, Ca2(+) permeability, and binding to allosteric modulators. Plays a role in dendritic branching in brain neurons and in synaptic plasticity. The sequence is that of Glutamate receptor ionotropic, NMDA 2A from Xenopus laevis (African clawed frog).